The primary structure comprises 242 residues: Venom nerve growth factor 3 (242 aa).

Positions 1–18 are cleaved as a signal peptide; that stretch reads MSMLCYTLIIAFLIGIWA. A propeptide spanning residues 19-125 is cleaved from the precursor; that stretch reads APKSEDNVPL…ALNRNIRSKR (107 aa). The span at 48–66 shows a compositional bias: basic and acidic residues; it reads LKTSRNTDQRHPAPKKAED. The segment at 48–69 is disordered; that stretch reads LKTSRNTDQRHPAPKKAEDQEL. Disulfide bonds link cysteine 139-cysteine 203, cysteine 181-cysteine 231, and cysteine 191-cysteine 233. N-linked (GlcNAc...) asparagine glycosylation is present at asparagine 147.

It belongs to the NGF-beta family. Homodimer; non-covalently linked. In terms of tissue distribution, expressed by the venom gland.

Its subcellular location is the secreted. Nerve growth factor is important for the development and maintenance of the sympathetic and sensory nervous systems. It stimulates division and differentiation of sympathetic and embryonic sensory neurons as well as basal forebrain cholinergic neurons in the brain. Its relevance in the snake venom is not clear. However, it has been shown to inhibit metalloproteinase-dependent proteolysis of platelet glycoprotein Ib alpha, suggesting a metalloproteinase inhibition to prevent metalloprotease autodigestion and/or protection against prey proteases. Binds a lipid between the two protein chains in the homodimer. The lipid-bound form promotes histamine relase from mouse mast cells, contrary to the lipid-free form. The protein is Venom nerve growth factor 3 of Demansia vestigiata (Lesser black whip snake).